We begin with the raw amino-acid sequence, 323 residues long: Casein kinase I (323 aa).

The Protein kinase domain maps to 9-278 (YALGKKLGSG…LRRLLKDLFI (270 aa)). ATP-binding positions include 15–23 (LGSGSFGDI) and K38. The active-site Proton acceptor is the D128.

This sequence belongs to the protein kinase superfamily. CK1 Ser/Thr protein kinase family. Casein kinase I subfamily. Mg(2+) serves as cofactor.

The protein resides in the cytoplasm. It is found in the cytoplasmic vesicle. Its subcellular location is the secretory vesicle. It localises to the microneme. The protein localises to the secreted. The protein resides in the host cell surface. The catalysed reaction is L-seryl-[protein] + ATP = O-phospho-L-seryl-[protein] + ADP + H(+). It carries out the reaction L-threonyl-[protein] + ATP = O-phospho-L-threonyl-[protein] + ADP + H(+). Functionally, serine/threonine-protein kinase likely to be involved in many cellular processes. This chain is Casein kinase I (CK1), found in Plasmodium yoelii yoelii.